Consider the following 353-residue polypeptide: ATP-dependent kinase YFH7 (353 aa).

Residue 31–39 (GSPGSGKST) participates in ATP binding.

The protein belongs to the YFH7 family.

ATP-dependent kinase that could be involved in endoplasmic reticulum membrane assembly. This chain is ATP-dependent kinase YFH7 (YFH7), found in Saccharomyces cerevisiae (strain RM11-1a) (Baker's yeast).